The primary structure comprises 494 residues: tRNA-2-methylthio-N(6)-dimethylallyladenosine synthase (494 aa).

Residues 4–120 (RSYQVRTFGC…LPVLLERARH (117 aa)) enclose the MTTase N-terminal domain. [4Fe-4S] cluster contacts are provided by cysteine 13, cysteine 49, cysteine 83, cysteine 157, cysteine 161, and cysteine 164. Residues 143-374 (RASHHSAWVS…SLQDEMSWAE (232 aa)) enclose the Radical SAM core domain. Residues 376–449 (RAQVGRRVEI…PHHLTADGPL (74 aa)) enclose the TRAM domain. Positions 465–494 (RAIAGDTPRPDRPAVSLGMPQLRPSAPAAR) are disordered.

This sequence belongs to the methylthiotransferase family. MiaB subfamily. Monomer. [4Fe-4S] cluster is required as a cofactor.

Its subcellular location is the cytoplasm. It catalyses the reaction N(6)-dimethylallyladenosine(37) in tRNA + (sulfur carrier)-SH + AH2 + 2 S-adenosyl-L-methionine = 2-methylsulfanyl-N(6)-dimethylallyladenosine(37) in tRNA + (sulfur carrier)-H + 5'-deoxyadenosine + L-methionine + A + S-adenosyl-L-homocysteine + 2 H(+). Catalyzes the methylthiolation of N6-(dimethylallyl)adenosine (i(6)A), leading to the formation of 2-methylthio-N6-(dimethylallyl)adenosine (ms(2)i(6)A) at position 37 in tRNAs that read codons beginning with uridine. The protein is tRNA-2-methylthio-N(6)-dimethylallyladenosine synthase of Parafrankia sp. (strain EAN1pec).